A 312-amino-acid polypeptide reads, in one-letter code: Acetyl-coenzyme A carboxylase carboxyl transferase subunit alpha (312 aa).

Residues 36-286 enclose the CoA carboxyltransferase C-terminal domain; sequence NLEKEISKTY…ADYVKKSLNE (251 aa).

It belongs to the AccA family. Acetyl-CoA carboxylase is a heterohexamer composed of biotin carboxyl carrier protein (AccB), biotin carboxylase (AccC) and two subunits each of ACCase subunit alpha (AccA) and ACCase subunit beta (AccD).

The protein localises to the cytoplasm. It carries out the reaction N(6)-carboxybiotinyl-L-lysyl-[protein] + acetyl-CoA = N(6)-biotinyl-L-lysyl-[protein] + malonyl-CoA. The protein operates within lipid metabolism; malonyl-CoA biosynthesis; malonyl-CoA from acetyl-CoA: step 1/1. Its function is as follows. Component of the acetyl coenzyme A carboxylase (ACC) complex. First, biotin carboxylase catalyzes the carboxylation of biotin on its carrier protein (BCCP) and then the CO(2) group is transferred by the carboxyltransferase to acetyl-CoA to form malonyl-CoA. The sequence is that of Acetyl-coenzyme A carboxylase carboxyl transferase subunit alpha from Campylobacter jejuni subsp. doylei (strain ATCC BAA-1458 / RM4099 / 269.97).